We begin with the raw amino-acid sequence, 160 residues long: Small ribosomal subunit protein uS10m (160 aa).

It belongs to the universal ribosomal protein uS10 family. As to quaternary structure, component of the mitochondrial ribosome small subunit (28S) which comprises a 12S rRNA and about 30 distinct proteins.

It is found in the mitochondrion. The polypeptide is Small ribosomal subunit protein uS10m (Mrps10) (Mus musculus (Mouse)).